A 540-amino-acid polypeptide reads, in one-letter code: Glucose-6-phosphate isomerase (540 aa).

E351 functions as the Proton donor in the catalytic mechanism. Active-site residues include H382 and K506.

Belongs to the GPI family.

It localises to the cytoplasm. The enzyme catalyses alpha-D-glucose 6-phosphate = beta-D-fructose 6-phosphate. It participates in carbohydrate biosynthesis; gluconeogenesis. The protein operates within carbohydrate degradation; glycolysis; D-glyceraldehyde 3-phosphate and glycerone phosphate from D-glucose: step 2/4. In terms of biological role, catalyzes the reversible isomerization of glucose-6-phosphate to fructose-6-phosphate. The sequence is that of Glucose-6-phosphate isomerase from Corynebacterium glutamicum (strain ATCC 13032 / DSM 20300 / JCM 1318 / BCRC 11384 / CCUG 27702 / LMG 3730 / NBRC 12168 / NCIMB 10025 / NRRL B-2784 / 534).